Reading from the N-terminus, the 266-residue chain is Apolipoprotein A-I (266 aa).

Positions 1–18 (MKAALLTLAVLFLTGSQA) are cleaved as a signal peptide. 2 consecutive repeat copies span residues 67 to 88 (LKLL…EQIG) and 89 to 110 (PVTQ…QEMS). The interval 67-266 (LKLLDNWDSL…DEATKKLNAQ (200 aa)) is 10 X approximate tandem repeats. A Methionine sulfoxide modification is found at methionine 109. The 3; half-length repeat unit spans residues 111–121 (KDLEEVKQKVQ). Repeat copies occupy residues 122 to 143 (PYLD…QKVA), 144 to 165 (PLGS…EKLS), 166 to 187 (PLAE…AQLA), 188 to 209 (PYSD…EGGG), and 210 to 231 (ASLA…EKAR). The stretch at 232–242 (PALEDLRQGLL) is one 9; half-length repeat. Repeat unit 10 spans residues 243–266 (PVLESFKVSLLAAIDEATKKLNAQ).

This sequence belongs to the apolipoprotein A1/A4/E family. In terms of assembly, homodimer. Interacts with APOA1BP and CLU. Component of a sperm activating protein complex (SPAP), consisting of APOA1, an immunoglobulin heavy chain, an immunoglobulin light chain and albumin. Interacts with NDRG1. Interacts with SCGB3A2. Interacts with NAXE and YJEFN3. Palmitoylated. Post-translationally, glycosylated. In terms of processing, phosphorylation sites are present in the extracellular medium. As to expression, major protein of plasma HDL, also found in chylomicrons. Synthesized in the liver and small intestine.

The protein localises to the secreted. Functionally, participates in the reverse transport of cholesterol from tissues to the liver for excretion by promoting cholesterol efflux from tissues and by acting as a cofactor for the lecithin cholesterol acyltransferase (LCAT). As part of the SPAP complex, activates spermatozoa motility. The sequence is that of Apolipoprotein A-I (APOA1) from Canis lupus familiaris (Dog).